A 496-amino-acid chain; its full sequence is Glutamyl-tRNA(Gln) amidotransferase subunit A (496 aa).

Active-site charge relay system residues include Lys-79 and Ser-159. The Acyl-ester intermediate role is filled by Ser-183.

The protein belongs to the amidase family. GatA subfamily. In terms of assembly, heterotrimer of A, B and C subunits.

The catalysed reaction is L-glutamyl-tRNA(Gln) + L-glutamine + ATP + H2O = L-glutaminyl-tRNA(Gln) + L-glutamate + ADP + phosphate + H(+). Functionally, allows the formation of correctly charged Gln-tRNA(Gln) through the transamidation of misacylated Glu-tRNA(Gln) in organisms which lack glutaminyl-tRNA synthetase. The reaction takes place in the presence of glutamine and ATP through an activated gamma-phospho-Glu-tRNA(Gln). This Ruegeria pomeroyi (strain ATCC 700808 / DSM 15171 / DSS-3) (Silicibacter pomeroyi) protein is Glutamyl-tRNA(Gln) amidotransferase subunit A.